The primary structure comprises 450 residues: Methionine aminopeptidase 2-2 (450 aa).

Composition is skewed to basic and acidic residues over residues 1–10 (MGAKISEDHP) and 30–39 (RGAHLSRDGD). The interval 1–100 (MGAKISEDHP…PPRVPLSELF (100 aa)) is disordered. A compositionally biased stretch (acidic residues) spans 47 to 56 (GDDDDDDDEG). Over residues 69 to 86 (KKKKKKRKPKKKKAKKAT) the composition is skewed to basic residues. His211 serves as a coordination point for substrate. A divalent metal cation is bound by residues Asp232, Asp243, and His302. His310 is a substrate binding site. Residues Glu335 and Glu431 each contribute to the a divalent metal cation site.

It belongs to the peptidase M24A family. Methionine aminopeptidase eukaryotic type 2 subfamily. Co(2+) is required as a cofactor. It depends on Zn(2+) as a cofactor. The cofactor is Mn(2+). Requires Fe(2+) as cofactor.

It localises to the cytoplasm. The enzyme catalyses Release of N-terminal amino acids, preferentially methionine, from peptides and arylamides.. Cotranslationally removes the N-terminal methionine from nascent proteins. The N-terminal methionine is often cleaved when the second residue in the primary sequence is small and uncharged (Met-Ala-, Cys, Gly, Pro, Ser, Thr, or Val). This chain is Methionine aminopeptidase 2-2, found in Fusarium vanettenii (strain ATCC MYA-4622 / CBS 123669 / FGSC 9596 / NRRL 45880 / 77-13-4) (Fusarium solani subsp. pisi).